The chain runs to 280 residues: Bifunctional protein FolD (280 aa).

NADP(+) is bound by residues 165–167 (GRS), serine 190, and isoleucine 231.

Belongs to the tetrahydrofolate dehydrogenase/cyclohydrolase family. As to quaternary structure, homodimer.

The catalysed reaction is (6R)-5,10-methylene-5,6,7,8-tetrahydrofolate + NADP(+) = (6R)-5,10-methenyltetrahydrofolate + NADPH. It carries out the reaction (6R)-5,10-methenyltetrahydrofolate + H2O = (6R)-10-formyltetrahydrofolate + H(+). The protein operates within one-carbon metabolism; tetrahydrofolate interconversion. Catalyzes the oxidation of 5,10-methylenetetrahydrofolate to 5,10-methenyltetrahydrofolate and then the hydrolysis of 5,10-methenyltetrahydrofolate to 10-formyltetrahydrofolate. The polypeptide is Bifunctional protein FolD (Moorella thermoacetica (strain ATCC 39073 / JCM 9320)).